Here is a 115-residue protein sequence, read N- to C-terminus: Transcription and mRNA export factor ENY2 (115 aa).

Belongs to the ENY2 family. As to quaternary structure, component of a deubiquitination module (DUB module) formed by ENY2, SGF11, and UBP22 in Arabidopsis. Interacts directly with SGF11, but not with UBP22. Interacts with MOS4. As to expression, expressed in roots, cotyledons, leaves and upper part of sepals.

The protein resides in the nucleus. The protein localises to the nucleoplasm. Functionally, component of a deubiquitination module (DUB module) that specifically deubiquinates monoubiquinated histone H2B (H2Bub). Does not seem to be a component of the TREX-2 complex. Seems to act independently of the SAGA multiprotein complex. The DUB module is responsible for the major H2Bub deubiquitinase activity in Arabidopsis. This chain is Transcription and mRNA export factor ENY2, found in Arabidopsis thaliana (Mouse-ear cress).